The following is a 268-amino-acid chain: NADH-quinone oxidoreductase subunit B 2 (268 aa).

Residues Cys-42, Cys-43, Cys-108, and Cys-138 each contribute to the [4Fe-4S] cluster site. A disordered region spans residues 237–268 (SPNKAKGVAPEIRHNDLKRPAVEVDHARDEQR). Over residues 247–268 (EIRHNDLKRPAVEVDHARDEQR) the composition is skewed to basic and acidic residues.

The protein belongs to the complex I 20 kDa subunit family. In terms of assembly, NDH-1 is composed of 14 different subunits. Subunits NuoB, C, D, E, F, and G constitute the peripheral sector of the complex. [4Fe-4S] cluster serves as cofactor.

The protein localises to the cell membrane. The catalysed reaction is a quinone + NADH + 5 H(+)(in) = a quinol + NAD(+) + 4 H(+)(out). Functionally, NDH-1 shuttles electrons from NADH, via FMN and iron-sulfur (Fe-S) centers, to quinones in the respiratory chain. The immediate electron acceptor for the enzyme in this species is believed to be ubiquinone. Couples the redox reaction to proton translocation (for every two electrons transferred, four hydrogen ions are translocated across the cytoplasmic membrane), and thus conserves the redox energy in a proton gradient. The protein is NADH-quinone oxidoreductase subunit B 2 of Roseiflexus castenholzii (strain DSM 13941 / HLO8).